The chain runs to 219 residues: Mucosal pentraxin (219 aa).

A signal peptide spans M1–S19. The Pentraxin (PTX) domain occupies D24–T219. C55 and C114 form a disulfide bridge. Positions 77, 78, 155, 156, 157, and 167 each coordinate Ca(2+).

Belongs to the pentraxin family. Homopentamer. Pentraxin (or pentaxin) have a discoid arrangement of 5 non-covalently bound subunits. Requires Ca(2+) as cofactor. Expression is restricted to small intestine, stomach and colon. Within colon, expressed in epithelial cells located within the lower to mid region of transverse and distal crypts, but not in proximal colon.

Its subcellular location is the secreted. The chain is Mucosal pentraxin (Mptx1) from Rattus norvegicus (Rat).